The chain runs to 250 residues: MENTIVIKLGGVASDNLTEGFFRQITEWQAANKKIVLVHGGGHYITKMMEALAIPVETKNGLRVTNKATLEVTKMVLIGQVQPAITTAFQKRNISVIGLNASDTGLLEADRLSDTDLGLVGKITKVKTNLIEQLLSENIITVIAPLGINSEHDWLNVNADTAACEVASALHAEALYLLTDVPGVKNGSEIIGEIATAEIEKLQSTGVIKGGMIPKLASAAFAAENGVGQVIITDSLNNSGTKIKNKVAIG.

Substrate-binding positions include 41-42, arginine 63, and asparagine 156; that span reads GG.

Belongs to the acetylglutamate kinase family. ArgB subfamily.

The protein resides in the cytoplasm. It carries out the reaction N-acetyl-L-glutamate + ATP = N-acetyl-L-glutamyl 5-phosphate + ADP. It functions in the pathway amino-acid biosynthesis; L-arginine biosynthesis; N(2)-acetyl-L-ornithine from L-glutamate: step 2/4. In terms of biological role, catalyzes the ATP-dependent phosphorylation of N-acetyl-L-glutamate. The polypeptide is Acetylglutamate kinase (Listeria monocytogenes serovar 1/2a (strain ATCC BAA-679 / EGD-e)).